The sequence spans 238 residues: Urease accessory protein UreG (238 aa).

Over residues 1-15 the composition is skewed to basic and acidic residues; the sequence is MPPHLIDGEPHDHAH. A disordered region spans residues 1–27; sequence MPPHLIDGEPHDHAHDRPKRQRTPGEP. Position 34-41 (34-41) interacts with GTP; sequence GPVGSGKT.

The protein belongs to the SIMIBI class G3E GTPase family. UreG subfamily. In terms of assembly, homodimer. UreD, UreF and UreG form a complex that acts as a GTP-hydrolysis-dependent molecular chaperone, activating the urease apoprotein by helping to assemble the nickel containing metallocenter of UreC. The UreE protein probably delivers the nickel.

The protein resides in the cytoplasm. Facilitates the functional incorporation of the urease nickel metallocenter. This process requires GTP hydrolysis, probably effectuated by UreG. The chain is Urease accessory protein UreG from Nocardia farcinica (strain IFM 10152).